The sequence spans 438 residues: Trigger factor (438 aa).

The 86-residue stretch at 163–248 (GDKLNIDFEG…VKRIETTEAR (86 aa)) folds into the PPIase FKBP-type domain.

This sequence belongs to the FKBP-type PPIase family. Tig subfamily.

It localises to the cytoplasm. The catalysed reaction is [protein]-peptidylproline (omega=180) = [protein]-peptidylproline (omega=0). In terms of biological role, involved in protein export. Acts as a chaperone by maintaining the newly synthesized protein in an open conformation. Functions as a peptidyl-prolyl cis-trans isomerase. The protein is Trigger factor of Syntrophomonas wolfei subsp. wolfei (strain DSM 2245B / Goettingen).